The chain runs to 362 residues: Phosphoserine aminotransferase (362 aa).

L-glutamate contacts are provided by serine 9 and arginine 42. Pyridoxal 5'-phosphate contacts are provided by residues 76–77 (GR), tryptophan 102, threonine 153, aspartate 174, and glutamine 197. At lysine 198 the chain carries N6-(pyridoxal phosphate)lysine. 239–240 (NT) is a pyridoxal 5'-phosphate binding site.

This sequence belongs to the class-V pyridoxal-phosphate-dependent aminotransferase family. SerC subfamily. As to quaternary structure, homodimer. Pyridoxal 5'-phosphate serves as cofactor.

It localises to the cytoplasm. It carries out the reaction O-phospho-L-serine + 2-oxoglutarate = 3-phosphooxypyruvate + L-glutamate. The catalysed reaction is 4-(phosphooxy)-L-threonine + 2-oxoglutarate = (R)-3-hydroxy-2-oxo-4-phosphooxybutanoate + L-glutamate. The protein operates within amino-acid biosynthesis; L-serine biosynthesis; L-serine from 3-phospho-D-glycerate: step 2/3. Its pathway is cofactor biosynthesis; pyridoxine 5'-phosphate biosynthesis; pyridoxine 5'-phosphate from D-erythrose 4-phosphate: step 3/5. Functionally, catalyzes the reversible conversion of 3-phosphohydroxypyruvate to phosphoserine and of 3-hydroxy-2-oxo-4-phosphonooxybutanoate to phosphohydroxythreonine. The protein is Phosphoserine aminotransferase of Enterobacter sp. (strain 638).